A 103-amino-acid polypeptide reads, in one-letter code: Small ribosomal subunit protein uS10 (103 aa).

Belongs to the universal ribosomal protein uS10 family. As to quaternary structure, part of the 30S ribosomal subunit.

In terms of biological role, involved in the binding of tRNA to the ribosomes. This chain is Small ribosomal subunit protein uS10, found in Pseudomonas aeruginosa (strain LESB58).